A 429-amino-acid chain; its full sequence is Adenylosuccinate synthetase (429 aa).

GTP contacts are provided by residues 12–18 (GDEGKGK) and 40–42 (GHT). The active-site Proton acceptor is the Asp-13. Mg(2+)-binding residues include Asp-13 and Gly-40. IMP-binding positions include 13–16 (DEGK), 38–41 (NAGH), Thr-128, Arg-142, Gln-223, Thr-238, and Arg-302. His-41 functions as the Proton donor in the catalytic mechanism. A substrate-binding site is contributed by 298–304 (TTTGRPR). Residues Arg-304, 330–332 (SID), and 412–414 (SVG) contribute to the GTP site.

The protein belongs to the adenylosuccinate synthetase family. As to quaternary structure, homodimer. Mg(2+) is required as a cofactor.

It is found in the cytoplasm. The catalysed reaction is IMP + L-aspartate + GTP = N(6)-(1,2-dicarboxyethyl)-AMP + GDP + phosphate + 2 H(+). It participates in purine metabolism; AMP biosynthesis via de novo pathway; AMP from IMP: step 1/2. Plays an important role in the de novo pathway of purine nucleotide biosynthesis. Catalyzes the first committed step in the biosynthesis of AMP from IMP. This is Adenylosuccinate synthetase from Lysinibacillus sphaericus (strain C3-41).